Here is a 151-residue protein sequence, read N- to C-terminus: Ribosome maturation factor RimP (151 aa).

Belongs to the RimP family.

The protein resides in the cytoplasm. Required for maturation of 30S ribosomal subunits. This Caldicellulosiruptor bescii (strain ATCC BAA-1888 / DSM 6725 / KCTC 15123 / Z-1320) (Anaerocellum thermophilum) protein is Ribosome maturation factor RimP.